The sequence spans 489 residues: Glycogen synthase (489 aa).

Position 15 (Lys-15) interacts with ADP-alpha-D-glucose.

It belongs to the glycosyltransferase 1 family. Bacterial/plant glycogen synthase subfamily.

It carries out the reaction [(1-&gt;4)-alpha-D-glucosyl](n) + ADP-alpha-D-glucose = [(1-&gt;4)-alpha-D-glucosyl](n+1) + ADP + H(+). It participates in glycan biosynthesis; glycogen biosynthesis. Its function is as follows. Synthesizes alpha-1,4-glucan chains using ADP-glucose. The protein is Glycogen synthase of Francisella tularensis subsp. tularensis (strain SCHU S4 / Schu 4).